Consider the following 73-residue polypeptide: Small ribosomal subunit protein bS18 (73 aa).

This sequence belongs to the bacterial ribosomal protein bS18 family. As to quaternary structure, part of the 30S ribosomal subunit. Forms a tight heterodimer with protein bS6.

Its function is as follows. Binds as a heterodimer with protein bS6 to the central domain of the 16S rRNA, where it helps stabilize the platform of the 30S subunit. This is Small ribosomal subunit protein bS18 from Coxiella burnetii (strain Dugway 5J108-111).